Here is a 158-residue protein sequence, read N- to C-terminus: NAD(P)H-quinone oxidoreductase subunit N (158 aa).

Belongs to the complex I NdhN subunit family. In terms of assembly, NDH-1 can be composed of about 15 different subunits; different subcomplexes with different compositions have been identified which probably have different functions.

The protein resides in the cellular thylakoid membrane. It catalyses the reaction a plastoquinone + NADH + (n+1) H(+)(in) = a plastoquinol + NAD(+) + n H(+)(out). It carries out the reaction a plastoquinone + NADPH + (n+1) H(+)(in) = a plastoquinol + NADP(+) + n H(+)(out). In terms of biological role, NDH-1 shuttles electrons from an unknown electron donor, via FMN and iron-sulfur (Fe-S) centers, to quinones in the respiratory and/or the photosynthetic chain. The immediate electron acceptor for the enzyme in this species is believed to be plastoquinone. Couples the redox reaction to proton translocation, and thus conserves the redox energy in a proton gradient. Cyanobacterial NDH-1 also plays a role in inorganic carbon-concentration. In Prochlorococcus marinus (strain MIT 9215), this protein is NAD(P)H-quinone oxidoreductase subunit N.